The sequence spans 88 residues: Apolipoprotein C-I (88 aa).

Positions 1 to 26 (MRLFLSLPVLVVVLAMVLEGPAPTQA) are cleaved as a signal peptide.

This sequence belongs to the apolipoprotein C1 family.

It is found in the secreted. Its function is as follows. Inhibitor of lipoprotein binding to the low density lipoprotein (LDL) receptor, LDL receptor-related protein, and very low density lipoprotein (VLDL) receptor. Associates with high density lipoproteins (HDL) and the triacylglycerol-rich lipoproteins in the plasma and makes up about 10% of the protein of the VLDL and 2% of that of HDL. Appears to interfere directly with fatty acid uptake and is also the major plasma inhibitor of cholesteryl ester transfer protein (CETP). Binds free fatty acids and reduces their intracellular esterification. Modulates the interaction of APOE with beta-migrating VLDL and inhibits binding of beta-VLDL to the LDL receptor-related protein. The sequence is that of Apolipoprotein C-I (APOC1) from Leptonychotes weddellii (Weddell seal).